A 302-amino-acid polypeptide reads, in one-letter code: Nucleotide-binding protein Bmul_0520/BMULJ_02739 (302 aa).

8–15 (GISGSGKS) is an ATP binding site. 57 to 60 (DARS) contacts GTP.

It belongs to the RapZ-like family.

Displays ATPase and GTPase activities. The chain is Nucleotide-binding protein Bmul_0520/BMULJ_02739 from Burkholderia multivorans (strain ATCC 17616 / 249).